The chain runs to 133 residues: Small ribosomal subunit protein uS8 (133 aa).

It belongs to the universal ribosomal protein uS8 family. As to quaternary structure, part of the 30S ribosomal subunit. Contacts proteins S5 and S12.

Its function is as follows. One of the primary rRNA binding proteins, it binds directly to 16S rRNA central domain where it helps coordinate assembly of the platform of the 30S subunit. This is Small ribosomal subunit protein uS8 from Chlamydia abortus (strain DSM 27085 / S26/3) (Chlamydophila abortus).